We begin with the raw amino-acid sequence, 232 residues long: Alpha N-terminal protein methyltransferase 1 (232 aa).

S-adenosyl-L-methionine is bound by residues Gly-71, Arg-76, 123-124, and Gln-139; that span reads MQ.

It belongs to the methyltransferase superfamily. NTM1 family.

The protein localises to the cytoplasm. It carries out the reaction N-terminal L-alanyl-L-prolyl-L-lysyl-[protein] + 3 S-adenosyl-L-methionine = N-terminal N,N,N-trimethyl-L-alanyl-L-prolyl-L-lysyl-[protein] + 3 S-adenosyl-L-homocysteine + 3 H(+). It catalyses the reaction N-terminal L-seryl-L-prolyl-L-lysyl-[protein] + 3 S-adenosyl-L-methionine = N-terminal N,N,N-trimethyl-L-seryl-L-prolyl-L-lysyl-[protein] + 3 S-adenosyl-L-homocysteine + 3 H(+). The enzyme catalyses N-terminal L-prolyl-L-prolyl-L-lysyl-[protein] + 2 S-adenosyl-L-methionine = N-terminal N,N-dimethyl-L-prolyl-L-prolyl-L-lysyl-[protein] + 2 S-adenosyl-L-homocysteine + 2 H(+). Its function is as follows. Alpha-N-methyltransferase that methylates the N-terminus of target proteins containing the N-terminal motif [Ala/Pro/Ser]-Pro-Lys when the initiator Met is cleaved. Specifically catalyzes mono-, di- or tri-methylation of exposed alpha-amino group of Ala or Ser residue in the [Ala/Ser]-Pro-Lys motif and mono- or di-methylation of Pro in the Pro-Pro-Lys motif. Responsible for the N-terminal methylation of the ribosomal proteins RPL12A, RPL12B, RPS25A and RPS25B. The polypeptide is Alpha N-terminal protein methyltransferase 1 (TAE1) (Saccharomyces cerevisiae (strain ATCC 204508 / S288c) (Baker's yeast)).